The following is a 572-amino-acid chain: Sialate:O-sulfotransferase 1 (572 aa).

Topologically, residues 1 to 14 (MAKPFFRLQKFLRR) are cytoplasmic. A helical; Signal-anchor for type II membrane protein transmembrane segment spans residues 15 to 35 (TQFLLLFLTAAYLMTGSLLLL). Topologically, residues 36 to 572 (QRARVALPQA…AGLPREYVPR (537 aa)) are extracellular. An N-linked (GlcNAc...) asparagine glycan is attached at Asn105. WSC domains lie at 139–231 (RGNY…YSVG) and 242–337 (TATY…DTRC). The N-linked (GlcNAc...) asparagine glycan is linked to Asn254.

This sequence belongs to the WSCD family.

The protein localises to the golgi apparatus membrane. The enzyme catalyses a ganglioside GM1b + 3'-phosphoadenylyl sulfate = an 8-O-sulfo-ganglioside GM1b + adenosine 3',5'-bisphosphate + H(+). Its function is as follows. Sialate:O-sulfotransferase which catalyzes 8-O-sulfation at the Sia-glycan level using 3'-phosphoadenosine 5'-phosphosulfate (PAPS) as a donor, forming 8-O-sulfated Sia (Sia8S)-glycans. Displays selectivity toward glycolipids such as GM1 gangliosides. The polypeptide is Sialate:O-sulfotransferase 1 (Wscd1) (Mus musculus (Mouse)).